We begin with the raw amino-acid sequence, 462 residues long: Cytochrome P450 20A1 (462 aa).

The chain crosses the membrane as a helical span at residues 4–24; the sequence is FAIFAVTFLLALVGAVLYLYP. Residue Cys-409 participates in heme binding.

Belongs to the cytochrome P450 family. Heme is required as a cofactor.

It is found in the membrane. In Rattus norvegicus (Rat), this protein is Cytochrome P450 20A1 (Cyp20a1).